Consider the following 194-residue polypeptide: DNA replication complex GINS protein PSF3 (194 aa).

The protein belongs to the GINS3/PSF3 family. In terms of assembly, component of the GINS complex which is a heterotetramer of SLD5, PSF1, PSF2 and PSF3.

It localises to the nucleus. Its function is as follows. Functions as part of the GINS complex which plays an essential role in the initiation of DNA replication by binding to DNA replication origins and facilitating the assembly of the DNA replication machinery. This Saccharomyces cerevisiae (strain ATCC 204508 / S288c) (Baker's yeast) protein is DNA replication complex GINS protein PSF3.